A 334-amino-acid polypeptide reads, in one-letter code: GTPase Obg (334 aa).

The Obg domain occupies 1–159 (MKFIDQAIIH…RDIQLELMLL (159 aa)). The interval 67–86 (AQNGQNGSSRKSSGKKGDDI) is disordered. Over residues 68–77 (QNGQNGSSRK) the composition is skewed to low complexity. Positions 160–333 (ADVGTLGMPN…LCSDITKYLK (174 aa)) constitute an OBG-type G domain. GTP contacts are provided by residues 166–173 (GMPNVGKS), 191–195 (FTTLH), 213–216 (DIPG), 283–286 (NKID), and 314–316 (SSM). Residues Ser173 and Thr193 each contribute to the Mg(2+) site.

This sequence belongs to the TRAFAC class OBG-HflX-like GTPase superfamily. OBG GTPase family. Monomer. Mg(2+) is required as a cofactor.

It localises to the cytoplasm. An essential GTPase which binds GTP, GDP and possibly (p)ppGpp with moderate affinity, with high nucleotide exchange rates and a fairly low GTP hydrolysis rate. Plays a role in control of the cell cycle, stress response, ribosome biogenesis and in those bacteria that undergo differentiation, in morphogenesis control. This is GTPase Obg from Buchnera aphidicola subsp. Acyrthosiphon pisum (strain 5A).